A 664-amino-acid polypeptide reads, in one-letter code: Glycine--tRNA ligase beta subunit (664 aa).

It belongs to the class-II aminoacyl-tRNA synthetase family. In terms of assembly, tetramer of two alpha and two beta subunits.

The protein resides in the cytoplasm. The enzyme catalyses tRNA(Gly) + glycine + ATP = glycyl-tRNA(Gly) + AMP + diphosphate. In Rickettsia conorii (strain ATCC VR-613 / Malish 7), this protein is Glycine--tRNA ligase beta subunit.